A 433-amino-acid polypeptide reads, in one-letter code: MATDTERCIFRAFGQDFILNKHFHLTGKIGRGSHSLICSSTYTESNEETHVAIRKIPNAFGNKLSCKRTLRELKLLRHLRGHPNIVWLFDTDIVFYPNGALNGVYLYEELMECDLSQIIRSEQRLEDAHFQSFIYQILCALKYIHSANVLHCDLKPKNLLVNSDCQLKICNFGLSCSYSENHKVNDGFIKGYITSIWYKAPEILLNYQECTKAVDIWSTGCILAELLGRKPMFEGKDYVDHLNHILQILGTPPEETLQEIASQKVYNYIFQFGNIPGRSFESILPGANPEALELLKKMLEFDPKKRITVEDALEHPYLSMWHDIDEEFSCQKTFRFEFEHIESMAELGNEVIKEVFDFRKVVRKHPISGDSPSSSLSLEDAIPQEVVQVHPSRKVLPSYSPEFSYVSQLPSLTTTQPYQNLMGISSNSFQGVN.

The 296-residue stretch at 23–318 (FHLTGKIGRG…VEDALEHPYL (296 aa)) folds into the Protein kinase domain. Residues 29–37 (IGRGSHSLI) and K55 contribute to the ATP site. D153 functions as the Proton acceptor in the catalytic mechanism.

Belongs to the protein kinase superfamily. Ser/Thr protein kinase family. As to quaternary structure, interacts with RLM1.

The enzyme catalyses L-seryl-[protein] + ATP = O-phospho-L-seryl-[protein] + ADP + H(+). It catalyses the reaction L-threonyl-[protein] + ATP = O-phospho-L-threonyl-[protein] + ADP + H(+). Functionally, serine/threonine-protein kinase involved in the SLT2 mitogen-activated (MAP) kinase signaling pathway that regulates cell wall integrity. May also be involved in the mating pheromone and the CWI MAPK pathways. In Saccharomyces cerevisiae (strain ATCC 204508 / S288c) (Baker's yeast), this protein is Serine/threonine-protein kinase KDX1 (KDX1).